The chain runs to 364 residues: Uroporphyrinogen decarboxylase (364 aa).

Residues 49-53 (RQAGR), aspartate 98, tyrosine 173, serine 228, and histidine 341 contribute to the substrate site.

It belongs to the uroporphyrinogen decarboxylase family. Homodimer.

The protein resides in the cytoplasm. It catalyses the reaction uroporphyrinogen III + 4 H(+) = coproporphyrinogen III + 4 CO2. It functions in the pathway porphyrin-containing compound metabolism; protoporphyrin-IX biosynthesis; coproporphyrinogen-III from 5-aminolevulinate: step 4/4. Functionally, catalyzes the decarboxylation of four acetate groups of uroporphyrinogen-III to yield coproporphyrinogen-III. The protein is Uroporphyrinogen decarboxylase of Protochlamydia amoebophila (strain UWE25).